A 518-amino-acid chain; its full sequence is Cytochrome P450 704C1 (518 aa).

2 helical membrane passes run 5-25 (ILTM…WIAS) and 299-319 (VILN…SWFI). Residue cysteine 461 coordinates heme.

This sequence belongs to the cytochrome P450 family. The cofactor is heme.

It localises to the membrane. The sequence is that of Cytochrome P450 704C1 (CYP704C1) from Pinus taeda (Loblolly pine).